Reading from the N-terminus, the 331-residue chain is UPF0194 membrane protein YbhG (331 aa).

A signal peptide spans 1–19 (MKKPVVIGLAIAAIVAVIA). Residues 107 to 208 (EEIAQAAAAV…LDLQDTTLIA (102 aa)) are a coiled coil.

This sequence belongs to the UPF0194 family.

The protein localises to the periplasm. In Salmonella heidelberg (strain SL476), this protein is UPF0194 membrane protein YbhG.